Consider the following 342-residue polypeptide: Probable transposase for insertion-like sequence element IS1161 (342 aa).

The 161-residue stretch at 182–342 (IEERPEEINN…KKLFELTQTA (161 aa)) folds into the Integrase catalytic domain.

This sequence belongs to the transposase IS30 family.

Its function is as follows. Required for the transposition of the insertion element. The protein is Probable transposase for insertion-like sequence element IS1161 of Streptococcus salivarius.